The primary structure comprises 192 residues: uncharacterized protein (192 aa).

The B12-binding domain occupies 72–192 (GATVLLIVPP…SLVISEFSLV (121 aa)).

This is an uncharacterized protein from Rhodobacter capsulatus (Rhodopseudomonas capsulata).